The chain runs to 171 residues: 3-hydroxydecanoyl-[acyl-carrier-protein] dehydratase (171 aa).

Residue H70 is part of the active site.

Belongs to the thioester dehydratase family. FabA subfamily. In terms of assembly, homodimer.

It is found in the cytoplasm. It carries out the reaction a (3R)-hydroxyacyl-[ACP] = a (2E)-enoyl-[ACP] + H2O. It catalyses the reaction (3R)-hydroxydecanoyl-[ACP] = (2E)-decenoyl-[ACP] + H2O. The catalysed reaction is (2E)-decenoyl-[ACP] = (3Z)-decenoyl-[ACP]. Its pathway is lipid metabolism; fatty acid biosynthesis. Necessary for the introduction of cis unsaturation into fatty acids. Catalyzes the dehydration of (3R)-3-hydroxydecanoyl-ACP to E-(2)-decenoyl-ACP and then its isomerization to Z-(3)-decenoyl-ACP. Can catalyze the dehydratase reaction for beta-hydroxyacyl-ACPs with saturated chain lengths up to 16:0, being most active on intermediate chain length. This chain is 3-hydroxydecanoyl-[acyl-carrier-protein] dehydratase, found in Shewanella putrefaciens (strain CN-32 / ATCC BAA-453).